The chain runs to 193 residues: Interleukin-18 (193 aa).

The propeptide occupies Met-1–Asp-36.

The protein belongs to the IL-1 family. In terms of assembly, forms a ternary complex with ligand-binding receptor subunit IL18R1 and signaling receptor subunit IL18RAP at the plasma membrane. Mature IL18 first binds to IL18R1 forming a low affinity binary complex, which then interacts with IL18RAP to form a high affinity ternary complex that signals inside the cell. Interacts with cargo receptor TMED10; the interaction mediates the translocation from the cytoplasm into the ERGIC (endoplasmic reticulum-Golgi intermediate compartment) and thereby secretion. In terms of processing, the pro-IL-18 precursor is processed by CASP1, CASP4 or CASP5 to yield its mature, active form. The pro-IL-18 precursor features autoinhibitory interactions between the propeptide and the post-cleavage-site region, preventing recognition by the IL18R1 receptor. Processing by CASP1, CASP4 or CASP5 induces conformational changes to generate critical receptor-binding sites. The mature form is then secreted and released in the extracellular milieu by passing through the gasdermin-D (GSDMD) pore. In contrast, cleavage by CASP3 inactivates IL18. In terms of tissue distribution, expressed in ovarian carcinoma but undetectable in normal ovarian epithelial cells. Resistant to proteolytic activation by caspase-1 and -4.

Its subcellular location is the cytoplasm. It is found in the cytosol. The protein localises to the secreted. Its function is as follows. Pro-inflammatory cytokine primarily involved in epithelial barrier repair, polarized T-helper 1 (Th1) cell and natural killer (NK) cell immune responses. Upon binding to IL18R1 and IL18RAP, forms a signaling ternary complex which activates NF-kappa-B, triggering synthesis of inflammatory mediators. Synergizes with IL12/interleukin-12 to induce IFNG synthesis from T-helper 1 (Th1) cells and natural killer (NK) cells. Involved in transduction of inflammation downstream of pyroptosis: its mature form is specifically released in the extracellular milieu by passing through the gasdermin-D (GSDMD) pore. The protein is Interleukin-18 of Homo sapiens (Human).